We begin with the raw amino-acid sequence, 244 residues long: Venom nerve growth factor (244 aa).

Residues Met1–Ala18 form the signal peptide. Positions Ala19 to Arg125 are excised as a propeptide. Cystine bridges form between Cys139–Cys204, Cys182–Cys232, and Cys192–Cys234. N-linked (GlcNAc...) asparagine glycosylation occurs at Asn148.

Belongs to the NGF-beta family. Homodimer; non-covalently linked. N-glycosylated. In terms of tissue distribution, expressed by the venom gland.

Its subcellular location is the secreted. In terms of biological role, nerve growth factor is important for the development and maintenance of the sympathetic and sensory nervous systems. It stimulates division and differentiation of sympathetic and embryonic sensory neurons as well as basal forebrain cholinergic neurons in the brain. Its relevance in the snake venom is not clear. However, it has been shown to inhibit metalloproteinase-dependent proteolysis of platelet glycoprotein Ib alpha, suggesting a metalloproteinase inhibition to prevent metalloprotease autodigestion and/or protection against prey proteases. Binds a lipid between the two protein chains in the homodimer. The lipid-bound form promotes histamine relase from mouse mast cells, contrary to the lipid-free form. It promotes neurite outgrowth in rat PC12 pheochromocytoma cells. This Macrovipera lebetinus (Levantine viper) protein is Venom nerve growth factor.